The primary structure comprises 73 residues: Serine rich endogenous peptide 14 (73 aa).

The signal sequence occupies residues 1–31 (MAAKTSNLVALLLSLFLLLLSISSQVGLGEA). Positions 44–73 (VSHPSPPPPHRSMAPPIFVPPSTSHKGQGP) are disordered. The SCOOP motif signature appears at 59-73 (PIFVPPSTSHKGQGP). Over residues 64–73 (PSTSHKGQGP) the composition is skewed to polar residues. Positions 65–67 (STS) match the SxS motif essential for MIK2 binding motif.

Belongs to the serine rich endogenous peptide (SCOOP) phytocytokine family. Interacts with MIK2 (via extracellular leucine-rich repeat domain); this interaction triggers the formation of complex between MIK2 and the BAK1/SERK3 and SERK4 coreceptors, and subsequent BAK1 activation by phosphorylation. In terms of tissue distribution, mostly expressed in seedlings shoots and leaves, and, to a lower extent, in roots, stems, siliques, seeds and flowers.

The protein localises to the cell membrane. The protein resides in the secreted. It is found in the extracellular space. It localises to the apoplast. In terms of biological role, brassicaceae-specific phytocytokine (plant endogenous peptide released into the apoplast) perceived by MIK2 in a BAK1/SERK3 and SERK4 coreceptors-dependent manner, that modulates various physiological and antimicrobial processes including growth prevention and reactive oxygen species (ROS) response regulation. Inhibits root growth and regulates root meristems. Prevents general growth and development. Exhibits antibacterial effects against Pseudomonas syringae pv. tomato DC3000, Ralstonia solanacearum, Bacillus subtilis and Agrobacterium tumefaciens, thus being an antimicrobial peptide (AMP). The chain is Serine rich endogenous peptide 14 from Arabidopsis thaliana (Mouse-ear cress).